Reading from the N-terminus, the 172-residue chain is Envelope protein UL45 (172 aa).

The Intravirion portion of the chain corresponds to 1–27; the sequence is MAFRASGPAYQPLAPAASPARARVPAV. Residues 28–48 form a helical; Signal-anchor for type II membrane protein membrane-spanning segment; that stretch reads AWIGVGAIVGAFALVAALVLV. Residues 49 to 172 are Virion surface-facing; it reads PPRSSWGLSP…TSIRNALGLP (124 aa).

It belongs to the herpesviridae HHV-1 UL45 family.

It is found in the virion membrane. In terms of biological role, important virulence factor of HSV neurotropism. Seems to be required for glycoprotein B-induced fusion. Dispensable for growth in vitro. This is Envelope protein UL45 from Homo sapiens (Human).